We begin with the raw amino-acid sequence, 556 residues long: 2-isopropylmalate synthase (556 aa).

The 275-residue stretch at proline 33–aspartate 307 folds into the Pyruvate carboxyltransferase domain. Residues aspartate 42, histidine 246, histidine 248, and asparagine 282 each coordinate Mg(2+). A regulatory domain region spans residues alanine 439 to alanine 556.

Belongs to the alpha-IPM synthase/homocitrate synthase family. LeuA type 2 subfamily. Homodimer. Mg(2+) is required as a cofactor.

The protein localises to the cytoplasm. It carries out the reaction 3-methyl-2-oxobutanoate + acetyl-CoA + H2O = (2S)-2-isopropylmalate + CoA + H(+). It functions in the pathway amino-acid biosynthesis; L-leucine biosynthesis; L-leucine from 3-methyl-2-oxobutanoate: step 1/4. In terms of biological role, catalyzes the condensation of the acetyl group of acetyl-CoA with 3-methyl-2-oxobutanoate (2-ketoisovalerate) to form 3-carboxy-3-hydroxy-4-methylpentanoate (2-isopropylmalate). In Stutzerimonas stutzeri (strain A1501) (Pseudomonas stutzeri), this protein is 2-isopropylmalate synthase.